A 376-amino-acid polypeptide reads, in one-letter code: DNA replication and repair protein RecF (376 aa).

30–37 (GHNGVGKT) contacts ATP.

Belongs to the RecF family.

It is found in the cytoplasm. The RecF protein is involved in DNA metabolism; it is required for DNA replication and normal SOS inducibility. RecF binds preferentially to single-stranded, linear DNA. It also seems to bind ATP. This is DNA replication and repair protein RecF from Salinispora arenicola (strain CNS-205).